The sequence spans 130 residues: Splicing regulatory small protein (130 aa).

Positions 1 to 10 are enriched in basic residues; that stretch reads MRTKPQRPRA. Disordered regions lie at residues 1-29 and 74-130; these read MRTK…EETG and GRAL…STRR. The tract at residues 16-22 is mediates interaction with SRSF3; the sequence is GQPCGSP. Residues 77–98 are compositionally biased toward basic and acidic residues; sequence LEPKADPHTCPYGRKESRGEKV. Positions 120–130 are enriched in polar residues; the sequence is SLKSGSPSTRR.

Interacts with SRSF3; increases SRSF3 binding to specific exons.

The protein resides in the nucleus. Its function is as follows. Interacts with the splicing factor SRSF3 and increases its binding to specific exons within pre-mRNA, thereby regulating exon-inclusion during alternative splicing. Does not directly bind pre-mRNA and could regulate a wider range of splicing factors through a similar mechanism. The chain is Splicing regulatory small protein from Homo sapiens (Human).